The following is a 519-amino-acid chain: Ion-translocating oxidoreductase complex subunit C (519 aa).

4Fe-4S ferredoxin-type domains follow at residues 372–401 and 411–440; these read ETPE…FELN and GAAK…VQSF. Residues C381, C384, C387, C391, C420, C423, C426, and C430 each contribute to the [4Fe-4S] cluster site. A disordered region spans residues 494-519; sequence KAEEAAAAAAMPPPATATAIQGEATP.

This sequence belongs to the 4Fe4S bacterial-type ferredoxin family. RnfC subfamily. In terms of assembly, the complex is composed of six subunits: RnfA, RnfB, RnfC, RnfD, RnfE and RnfG. Requires [4Fe-4S] cluster as cofactor.

Its subcellular location is the cellular chromatophore membrane. Functionally, part of a membrane-bound complex that couples electron transfer with translocation of ions across the membrane. Required for nitrogen fixation. Involved in electron transfer to nitrogenase. The sequence is that of Ion-translocating oxidoreductase complex subunit C from Rhodobacter capsulatus (Rhodopseudomonas capsulata).